A 220-amino-acid polypeptide reads, in one-letter code: N-(5'-phosphoribosyl)anthranilate isomerase (220 aa).

The protein belongs to the TrpF family.

The enzyme catalyses N-(5-phospho-beta-D-ribosyl)anthranilate = 1-(2-carboxyphenylamino)-1-deoxy-D-ribulose 5-phosphate. Its pathway is amino-acid biosynthesis; L-tryptophan biosynthesis; L-tryptophan from chorismate: step 3/5. The polypeptide is N-(5'-phosphoribosyl)anthranilate isomerase (Leptothrix cholodnii (strain ATCC 51168 / LMG 8142 / SP-6) (Leptothrix discophora (strain SP-6))).